Here is a 307-residue protein sequence, read N- to C-terminus: Nucleotide-binding protein ACP_0619 (307 aa).

Residues 1 to 14 are compositionally biased toward basic and acidic residues; the sequence is MPAPEPTRRAKKDA. Residues 1–23 are disordered; it reads MPAPEPTRRAKKDASASPSPAHP. 33 to 40 provides a ligand contact to ATP; it reads GLSGAGKG. 83 to 86 contacts GTP; sequence DVRE.

It belongs to the RapZ-like family.

Functionally, displays ATPase and GTPase activities. The protein is Nucleotide-binding protein ACP_0619 of Acidobacterium capsulatum (strain ATCC 51196 / DSM 11244 / BCRC 80197 / JCM 7670 / NBRC 15755 / NCIMB 13165 / 161).